Consider the following 193-residue polypeptide: NADH-quinone oxidoreductase subunit B (193 aa).

Positions 72, 73, 137, and 167 each coordinate [4Fe-4S] cluster.

Belongs to the complex I 20 kDa subunit family. In terms of assembly, NDH-1 is composed of 14 different subunits. Subunits NuoB, C, D, E, F, and G constitute the peripheral sector of the complex. Requires [4Fe-4S] cluster as cofactor.

The protein resides in the cell inner membrane. The enzyme catalyses a quinone + NADH + 5 H(+)(in) = a quinol + NAD(+) + 4 H(+)(out). NDH-1 shuttles electrons from NADH, via FMN and iron-sulfur (Fe-S) centers, to quinones in the respiratory chain. The immediate electron acceptor for the enzyme in this species is believed to be ubiquinone. Couples the redox reaction to proton translocation (for every two electrons transferred, four hydrogen ions are translocated across the cytoplasmic membrane), and thus conserves the redox energy in a proton gradient. This chain is NADH-quinone oxidoreductase subunit B, found in Bartonella henselae (strain ATCC 49882 / DSM 28221 / CCUG 30454 / Houston 1) (Rochalimaea henselae).